The primary structure comprises 260 residues: Flap endonuclease Xni (260 aa).

Asp-109 is a Mg(2+) binding site. Residues 165–259 (VKPSQLADYW…DIRFTGPNKA (95 aa)) form the 5'-3' exonuclease domain. Residues Leu-176, Pro-185, Val-187, and Val-190 each contribute to the K(+) site. The tract at residues 189-194 (GVGPKA) is interaction with DNA.

Belongs to the Xni family. It depends on Mg(2+) as a cofactor. Requires K(+) as cofactor.

Its function is as follows. Has flap endonuclease activity. During DNA replication, flap endonucleases cleave the 5'-overhanging flap structure that is generated by displacement synthesis when DNA polymerase encounters the 5'-end of a downstream Okazaki fragment. In Vibrio campbellii (strain ATCC BAA-1116), this protein is Flap endonuclease Xni.